A 444-amino-acid chain; its full sequence is Orexin receptor type 2 (444 aa).

A compositionally biased stretch (basic and acidic residues) spans 1 to 10 (MSGTKLEDSP). The disordered stretch occupies residues 1-20 (MSGTKLEDSPPCRNWSSASE). Residues 1 to 54 (MSGTKLEDSPPCRNWSSASELNETQEPFLNPTDYDDEEFLRYLWREYLHPKEYE) are Extracellular-facing. Asparagine 14 and asparagine 22 each carry an N-linked (GlcNAc...) asparagine glycan. Residues 33 to 49 (DYDDEEFLRYLWREYLH) are required for response to orexin-A. Residues 55–75 (WVLIAGYIIVFVVALIGNVLV) form a helical membrane-spanning segment. At 76–88 (CVAVWKNHHMRTV) the chain is on the cytoplasmic side. The chain crosses the membrane as a helical span at residues 89–110 (TNYFIVNLSLADVLVTITCLPA). At 111–127 (TLVVDITETWFFGQSLC) the chain is on the extracellular side. Residues cysteine 127 and cysteine 210 are joined by a disulfide bond. The helical transmembrane segment at 128-150 (KVIPYLQTVSVSVSVLTLSCIAL) threads the bilayer. Residues 151–170 (DRWYAICHPLMFKSTAKRAR) lie on the Cytoplasmic side of the membrane. A helical membrane pass occupies residues 171–191 (NSIVIIWIVSCIIMIPQAIVM). Topologically, residues 192–222 (ECSTVFPGLANKTTLFTVCDERWGGEIYPKM) are extracellular. A glycan (N-linked (GlcNAc...) asparagine) is linked at asparagine 202. A helical transmembrane segment spans residues 223–243 (YHICFFLVTYMAPLCLMVLAY). At 244–304 (LQIFRKLWCR…QIRARRKTAR (61 aa)) the chain is on the cytoplasmic side. The chain crosses the membrane as a helical span at residues 305–326 (MLMIVLLVFAICYLPISILNVL). Position 324 (asparagine 324) interacts with suvorexant. Topologically, residues 327-342 (KRVFGMFAHTEDRETV) are extracellular. A helical membrane pass occupies residues 343 to 366 (YAWFTFSHWLVYANSAANPIIYNF). Residues 367-444 (LSGKFREEFK…ANGAGPLQNW (78 aa)) are Cytoplasmic-facing.

The protein belongs to the G-protein coupled receptor 1 family.

The protein localises to the cell membrane. Functionally, nonselective, high-affinity receptor for both orexin-A and orexin-B neuropeptides. Triggers an increase in cytoplasmic Ca(2+) levels in response to orexin-A binding. In Homo sapiens (Human), this protein is Orexin receptor type 2 (HCRTR2).